A 759-amino-acid chain; its full sequence is Secretin XpsD (759 aa).

Residues 1 to 21 form the signal peptide; it reads MSERMTPRLFPVSLLIGLLAG. A lipid anchor (N-palmitoyl cysteine) is attached at cysteine 22. Cysteine 22 carries S-diacylglycerol cysteine lipidation. A compositionally biased stretch (low complexity) spans 40–51; it reads VGAAGATQTTAE. Positions 40 to 69 are disordered; that stretch reads VGAAGATQTTAEQRADGNASAKPTPVIRRG. An N0 region spans residues 92-187; the sequence is GSATFNFEGE…APSTASPSAA (96 aa). The segment at 189–253 is N1; that stretch reads GFEVRVVPLK…VQIFDVDWLS (65 aa). An N2 region spans residues 254–323; the sequence is GMSVGVFPIQ…IQQWLDRIDS (70 aa). Positions 326 to 474 are N3; it reads GGVRLFSYEL…SIRDVIEKLD (149 aa). The interval 352–434 is disordered; the sequence is GGRGNGGNSG…PPSTNQNGSV (83 aa). The span at 392-401 shows a compositional bias: gly residues; the sequence is ATGGDIGGTS. Residues 425 to 434 are compositionally biased toward polar residues; it reads PPSTNQNGSV. A secretin region spans residues 479–734; sequence QVHIEAQIAE…VLITPSIVRN (256 aa). Residues 736–759 are s domain; it reads QDARDLTDEYGSKFKSMRPMDVHK.

Belongs to the bacterial secretin family. GSP D subfamily. Forms a cylindrical channel with 15 subunits. Binds to XpsN.

Its subcellular location is the cell outer membrane. Involved in a type II secretion system (T2SS, formerly general secretion pathway, GSP) for the export of proteins. This subunit forms the outer membrane channel. This chain is Secretin XpsD (xpsD), found in Xanthomonas campestris pv. campestris (strain ATCC 33913 / DSM 3586 / NCPPB 528 / LMG 568 / P 25).